The primary structure comprises 679 residues: Glycine--tRNA ligase beta subunit (679 aa).

It belongs to the class-II aminoacyl-tRNA synthetase family. Tetramer of two alpha and two beta subunits.

It localises to the cytoplasm. The catalysed reaction is tRNA(Gly) + glycine + ATP = glycyl-tRNA(Gly) + AMP + diphosphate. This chain is Glycine--tRNA ligase beta subunit, found in Thermodesulfovibrio yellowstonii (strain ATCC 51303 / DSM 11347 / YP87).